Reading from the N-terminus, the 179-residue chain is Photosystem I assembly protein Ycf3 (179 aa).

TPR repeat units lie at residues 29–62, 66–99, and 126–159; these read AFSY…EEDP, SYTL…NSNL, and NLEI…APDN.

This sequence belongs to the Ycf3 family.

The protein resides in the plastid. It localises to the chloroplast thylakoid membrane. In terms of biological role, essential for the assembly of the photosystem I (PSI) complex. May act as a chaperone-like factor to guide the assembly of the PSI subunits. In Trieres chinensis (Marine centric diatom), this protein is Photosystem I assembly protein Ycf3.